The chain runs to 319 residues: Cell surface A33 antigen (319 aa).

Residues methionine 1–alanine 21 form the signal peptide. Positions leucine 22 to arginine 134 constitute an Ig-like V-type domain. The Extracellular portion of the chain corresponds to leucine 22 to isoleucine 235. Disulfide bonds link cysteine 43–cysteine 117, cysteine 146–cysteine 222, and cysteine 162–cysteine 211. Asparagine 99, asparagine 112, asparagine 200, and asparagine 223 each carry an N-linked (GlcNAc...) asparagine glycan. The Ig-like C2-type domain occupies proline 140–alanine 227. Residues alanine 236–valine 256 traverse the membrane as a helical segment. Residues tyrosine 257–glutamine 319 are Cytoplasmic-facing. Basic and acidic residues-rich tracts occupy residues lysine 267–proline 276 and proline 284–serine 308. Positions lysine 267–glutamine 319 are disordered. A compositionally biased stretch (polar residues) spans serine 309 to glutamine 319.

Post-translationally, palmitoylated.

It is found in the membrane. May play a role in cell-cell recognition and signaling. The sequence is that of Cell surface A33 antigen (Gpa33) from Mus musculus (Mouse).